The following is an 827-amino-acid chain: Glycerol-3-phosphate acyltransferase (827 aa).

The short motif at 325 to 330 is the HXXXXD motif element; the sequence is CHRSHM.

Belongs to the GPAT/DAPAT family.

The protein resides in the cell inner membrane. It carries out the reaction sn-glycerol 3-phosphate + an acyl-CoA = a 1-acyl-sn-glycero-3-phosphate + CoA. It participates in phospholipid metabolism; CDP-diacylglycerol biosynthesis; CDP-diacylglycerol from sn-glycerol 3-phosphate: step 1/3. This Escherichia coli (strain SMS-3-5 / SECEC) protein is Glycerol-3-phosphate acyltransferase.